The sequence spans 192 residues: MNAIWIAVAAVSLLGLAFGAILGYASRRFAVEDDPVVEKIDEILPQSQCGQCGYPGCRPYAEAISCNGEKINRCAPGGEAVMLKIAELLNVEPQPLDGEAQELTPARMVAFIDENNCIGCTKCIQACPVDAIVGATRAMHTVMSDLCTGCNLCVDPCPTHCISLQPVAETPDSWKWDLNTIPVRIIPVEHHA.

The tract at residues Met-1–Ser-26 is hydrophobic. A 4Fe-4S domain is found at Glu-32–Val-91. The [4Fe-4S] cluster site is built by Cys-49, Cys-52, Cys-57, Cys-74, Cys-117, Cys-120, Cys-123, Cys-127, Cys-147, Cys-150, Cys-153, and Cys-157. 2 4Fe-4S ferredoxin-type domains span residues Met-108–Arg-137 and Ala-138–Val-167.

It belongs to the 4Fe4S bacterial-type ferredoxin family. RnfB subfamily. In terms of assembly, the complex is composed of six subunits: RsxA, RsxB, RsxC, RsxD, RsxE and RsxG. [4Fe-4S] cluster serves as cofactor.

It is found in the cell inner membrane. In terms of biological role, part of a membrane-bound complex that couples electron transfer with translocation of ions across the membrane. Required to maintain the reduced state of SoxR. The protein is Ion-translocating oxidoreductase complex subunit B of Escherichia coli O17:K52:H18 (strain UMN026 / ExPEC).